The chain runs to 727 residues: Engulfment and cell motility protein 1 (727 aa).

Y18 is subject to Phosphotyrosine; by HCK. N6-acetyllysine occurs at positions 100 and 105. The residue at position 216 (Y216) is a Phosphotyrosine; by HCK. Residues 319–492 (AQRDIIFELR…VVKEQVMRAL (174 aa)) form the ELMO domain. S344 carries the post-translational modification Phosphoserine. Residues Y395 and Y511 each carry the phosphotyrosine; by HCK modification. The 122-residue stretch at 555 to 676 (RLVEGTCFRK…DGLNALLGKD (122 aa)) folds into the PH domain. The short motif at 707–714 (PDAPPPIP) is the SH3-binding element. Phosphotyrosine; by HCK is present on Y720.

In terms of assembly, interacts with ADGRB1. Interacts directly with the SH3-domain of DOCK1 via its SH3-binding site. Part of a complex with DOCK1 and RAC1. Part of a complex with DOCK1 and CRK isoform CRK-II. Interacts with PLEKHG6. Interacts with HCK (via SH3 domain). Interacts with ADGRB3. Interacts with DOCK5. Post-translationally, phosphorylated by HCK. In terms of tissue distribution, widely expressed, with a higher expression in the spleen and placenta.

The protein resides in the cytoplasm. It is found in the cell membrane. Involved in cytoskeletal rearrangements required for phagocytosis of apoptotic cells and cell motility. Acts in association with DOCK1 and CRK. Was initially proposed to be required in complex with DOCK1 to activate Rac Rho small GTPases. May enhance the guanine nucleotide exchange factor (GEF) activity of DOCK1. This Homo sapiens (Human) protein is Engulfment and cell motility protein 1 (ELMO1).